We begin with the raw amino-acid sequence, 576 residues long: Proline--tRNA ligase (576 aa).

Belongs to the class-II aminoacyl-tRNA synthetase family. ProS type 1 subfamily. As to quaternary structure, homodimer.

It localises to the cytoplasm. The catalysed reaction is tRNA(Pro) + L-proline + ATP = L-prolyl-tRNA(Pro) + AMP + diphosphate. Functionally, catalyzes the attachment of proline to tRNA(Pro) in a two-step reaction: proline is first activated by ATP to form Pro-AMP and then transferred to the acceptor end of tRNA(Pro). As ProRS can inadvertently accommodate and process non-cognate amino acids such as alanine and cysteine, to avoid such errors it has two additional distinct editing activities against alanine. One activity is designated as 'pretransfer' editing and involves the tRNA(Pro)-independent hydrolysis of activated Ala-AMP. The other activity is designated 'posttransfer' editing and involves deacylation of mischarged Ala-tRNA(Pro). The misacylated Cys-tRNA(Pro) is not edited by ProRS. The chain is Proline--tRNA ligase from Pelobacter propionicus (strain DSM 2379 / NBRC 103807 / OttBd1).